We begin with the raw amino-acid sequence, 261 residues long: 4-hydroxy-tetrahydrodipicolinate reductase (261 aa).

NAD(+) contacts are provided by residues 11-16 (GFTGAM), 96-98 (GTT), and 122-125 (APNF). The active-site Proton donor/acceptor is His-152. His-153 contributes to the (S)-2,3,4,5-tetrahydrodipicolinate binding site. Catalysis depends on Lys-156, which acts as the Proton donor. 162-163 (GT) serves as a coordination point for (S)-2,3,4,5-tetrahydrodipicolinate.

It belongs to the DapB family.

It localises to the cytoplasm. The catalysed reaction is (S)-2,3,4,5-tetrahydrodipicolinate + NAD(+) + H2O = (2S,4S)-4-hydroxy-2,3,4,5-tetrahydrodipicolinate + NADH + H(+). It carries out the reaction (S)-2,3,4,5-tetrahydrodipicolinate + NADP(+) + H2O = (2S,4S)-4-hydroxy-2,3,4,5-tetrahydrodipicolinate + NADPH + H(+). The protein operates within amino-acid biosynthesis; L-lysine biosynthesis via DAP pathway; (S)-tetrahydrodipicolinate from L-aspartate: step 4/4. Its function is as follows. Catalyzes the conversion of 4-hydroxy-tetrahydrodipicolinate (HTPA) to tetrahydrodipicolinate. This Lactobacillus acidophilus (strain ATCC 700396 / NCK56 / N2 / NCFM) protein is 4-hydroxy-tetrahydrodipicolinate reductase.